The following is a 449-amino-acid chain: Xylose isomerase (449 aa).

Active-site residues include histidine 103 and aspartate 106. Mg(2+) contacts are provided by glutamate 234, glutamate 270, histidine 273, aspartate 298, aspartate 309, aspartate 311, and aspartate 342.

It belongs to the xylose isomerase family. As to quaternary structure, homotetramer. The cofactor is Mg(2+).

It localises to the cytoplasm. The catalysed reaction is alpha-D-xylose = alpha-D-xylulofuranose. This Levilactobacillus brevis (strain ATCC 367 / BCRC 12310 / CIP 105137 / JCM 1170 / LMG 11437 / NCIMB 947 / NCTC 947) (Lactobacillus brevis) protein is Xylose isomerase.